Reading from the N-terminus, the 544-residue chain is Chaperonin GroEL (544 aa).

Residues 30-33 (TLGP), Lys51, 87-91 (DGTTT), Gly415, 481-483 (DAL), and Asp497 each bind ATP.

This sequence belongs to the chaperonin (HSP60) family. As to quaternary structure, forms a cylinder of 14 subunits composed of two heptameric rings stacked back-to-back. Interacts with the co-chaperonin GroES.

It is found in the cytoplasm. The catalysed reaction is ATP + H2O + a folded polypeptide = ADP + phosphate + an unfolded polypeptide.. In terms of biological role, together with its co-chaperonin GroES, plays an essential role in assisting protein folding. The GroEL-GroES system forms a nano-cage that allows encapsulation of the non-native substrate proteins and provides a physical environment optimized to promote and accelerate protein folding. This Chlamydia trachomatis serovar A (strain ATCC VR-571B / DSM 19440 / HAR-13) protein is Chaperonin GroEL.